The chain runs to 541 residues: Tyrosine-protein kinase Yes (541 aa).

The span at 1 to 20 shows a compositional bias: basic and acidic residues; sequence MGCIKSKEDKGPAMKYRTDN. The disordered stretch occupies residues 1 to 43; sequence MGCIKSKEDKGPAMKYRTDNTPEPISSHVSHYGSDSSQATQSP. A lipid anchor (N-myristoyl glycine) is attached at Gly-2. Cys-3 is lipidated: S-palmitoyl cysteine; in membrane form. Residues 26 to 37 are compositionally biased toward low complexity; that stretch reads SSHVSHYGSDSS. The 62-residue stretch at 89–150 folds into the SH3 domain; the sequence is GGVTVFVALY…PSNYVAPADS (62 aa). The SH2 domain maps to 156–253; sequence WYFGKMGRKD…GLCHKLTTVC (98 aa). One can recognise a Protein kinase domain in the interval 275–528; it reads LRLEVKLGQG…YIQSFLEDYF (254 aa). ATP is bound by residues 281–289 and Lys-303; that span reads LGQGCFGEV. Asp-394 serves as the catalytic Proton acceptor. Residue Tyr-424 is modified to Phosphotyrosine; by autocatalysis. Tyr-535 is modified (phosphotyrosine; by CSK).

It belongs to the protein kinase superfamily. Tyr protein kinase family. SRC subfamily. Autophosphorylation at Tyr-424 maintains enzyme activity. Post-translationally, palmitoylation at Cys-3 promotes membrane localization.

It localises to the cell membrane. The protein resides in the cytoplasm. Its subcellular location is the cytoskeleton. The protein localises to the microtubule organizing center. It is found in the centrosome. It localises to the cytosol. The protein resides in the cell junction. The catalysed reaction is L-tyrosyl-[protein] + ATP = O-phospho-L-tyrosyl-[protein] + ADP + H(+). In terms of biological role, non-receptor protein tyrosine kinase that is involved in the regulation of cell growth and survival, apoptosis, cell-cell adhesion, cytoskeleton remodeling, differentiation, G2/M progression and cytokinesis. In Gallus gallus (Chicken), this protein is Tyrosine-protein kinase Yes (YES1).